The chain runs to 184 residues: Protein GrpE (184 aa).

Residues 1–24 (MADEQLDEKNLNSEEAGAVNGDAR) are disordered.

The protein belongs to the GrpE family. In terms of assembly, homodimer.

The protein localises to the cytoplasm. Participates actively in the response to hyperosmotic and heat shock by preventing the aggregation of stress-denatured proteins, in association with DnaK and GrpE. It is the nucleotide exchange factor for DnaK and may function as a thermosensor. Unfolded proteins bind initially to DnaJ; upon interaction with the DnaJ-bound protein, DnaK hydrolyzes its bound ATP, resulting in the formation of a stable complex. GrpE releases ADP from DnaK; ATP binding to DnaK triggers the release of the substrate protein, thus completing the reaction cycle. Several rounds of ATP-dependent interactions between DnaJ, DnaK and GrpE are required for fully efficient folding. The polypeptide is Protein GrpE (Pseudomonas entomophila (strain L48)).